Consider the following 109-residue polypeptide: uncharacterized protein (109 aa).

The tract at residues 77–98 is disordered; it reads TRTGHAYPRFTRPSFPSCNRNG.

This is an uncharacterized protein from Homo sapiens (Human).